The primary structure comprises 429 residues: Septin-11 (429 aa).

Alanine 2 carries the post-translational modification N-acetylalanine. A Phosphoserine modification is found at serine 9. Residues 38–304 (QGFCFNILCV…ELYRRCKLEE (267 aa)) enclose the Septin-type G domain. Positions 48-55 (GETGIGKS) are G1 motif. GTP-binding positions include 48 to 55 (GETGIGKS), glycine 103, 184 to 192 (KADTIAKNE), glycine 238, and arginine 253. Positions 100-103 (DTVG) are G3 motif. Positions 183 to 186 (AKAD) are G4 motif. Positions 320–415 (QETYEAKRNE…QSQAQQSGAQ (96 aa)) form a coiled coil. Residues 398-429 (KKAAAQLLQSQAQQSGAQQTKKDKDKKNASFT) form a disordered region. Residues 401–416 (AAQLLQSQAQQSGAQQ) show a composition bias toward low complexity. Residues 417–429 (TKKDKDKKNASFT) show a composition bias toward basic and acidic residues.

This sequence belongs to the TRAFAC class TrmE-Era-EngA-EngB-Septin-like GTPase superfamily. Septin GTPase family. As to quaternary structure, septins polymerize into heterooligomeric protein complexes that form filaments, and can associate with cellular membranes, actin filaments and microtubules. Forms homooligomers. GTPase activity is required for filament formation. Interacts with SEPTIN7, SEPTIN9 and SEPTIN12. Widely expressed, except in leukocytes.

It localises to the cytoplasm. It is found in the cytoskeleton. The protein localises to the synapse. The protein resides in the cell projection. Its subcellular location is the dendritic spine. It localises to the axon. Filament-forming cytoskeletal GTPase. May play a role in cytokinesis (Potential). May play a role in the cytoarchitecture of neurons, including dendritic arborization and dendritic spines, and in GABAergic synaptic connectivity. During Listeria monocytogenes infection, not required for the bacterial entry process, but restricts its efficacy. This chain is Septin-11, found in Homo sapiens (Human).